Reading from the N-terminus, the 334-residue chain is Methionine adenosyltransferase 2 subunit beta (334 aa).

NADP(+)-binding positions include 37-40 (TGLL), 60-62 (FRR), 71-72 (NL), cysteine 93, arginine 97, tyrosine 159, and leucine 185. Residue threonine 309 is modified to Phosphothreonine. The interval 319-334 (LWPFLIDKRWRQTVFH) is required for interaction with MAT2A.

This sequence belongs to the dTDP-4-dehydrorhamnose reductase family. MAT2B subfamily. In terms of assembly, heterotrimer; composed of a catalytic MAT2A homodimer that binds one regulatory MAT2B chain. Heterohexamer; composed of a central, catalytic MAT2A homotetramer flanked on either side by a regulatory MAT2B chain. NADP binding increases the affinity for MAT2A.

It functions in the pathway amino-acid biosynthesis; S-adenosyl-L-methionine biosynthesis; S-adenosyl-L-methionine from L-methionine: step 1/1. In terms of biological role, regulatory subunit of S-adenosylmethionine synthetase 2, an enzyme that catalyzes the formation of S-adenosylmethionine from methionine and ATP. Regulates MAT2A catalytic activity by changing its kinetic properties, increasing its affinity for L-methionine. Can bind NADP (in vitro). In Rattus norvegicus (Rat), this protein is Methionine adenosyltransferase 2 subunit beta (Mat2b).